The following is a 316-amino-acid chain: uncharacterized protein (316 aa).

The segment at 285 to 316 (APEGDLGDIIEVDPSEPRSDPYRRLRTPPPGG) is disordered. Positions 289 to 298 (DLGDIIEVDP) are enriched in acidic residues.

Functionally, possibly necessary for replication. This is an uncharacterized protein from Halobacterium salinarum (Halobacterium halobium).